Reading from the N-terminus, the 519-residue chain is Cyclic AMP-responsive element-binding protein 3-like protein 2 (519 aa).

Residues 1-374 (MEIMDSGEPF…SCRVTGTQTS (374 aa)) are Cytoplasmic-facing. 3 disordered regions span residues 58–77 (GRGD…PVPP), 85–121 (YSLC…MEQE), and 193–261 (GLEC…SGPL). Acidic residues predominate over residues 109–119 (ADSESDEWPME). Composition is skewed to low complexity over residues 205–217 (SSVG…SQSP) and 240–249 (PSSLSSSPLL). The region spanning 291-354 (ALKKIRRKIK…KSLLQQLHSL (64 aa)) is the bZIP domain. Residues 293-322 (KKIRRKIKNKISAQESRRKKKEYVDALEKK) form a basic motif region. The segment at 333–354 (LRRKVENLECTNKSLLQQLHSL) is leucine-zipper. The chain crosses the membrane as a helical; Signal-anchor for type II membrane protein span at residues 375-395 (TCLMVVVLCFSLFLGSFYPGL). Residues 396-519 (SPCSSITKAD…QLDRTVNETS (124 aa)) are Lumenal-facing. Positions 423–426 (RSLL) match the S1P recognition motif. 3 N-linked (GlcNAc...) asparagine glycosylation sites follow: asparagine 485, asparagine 503, and asparagine 516.

This sequence belongs to the bZIP family. ATF subfamily. As to quaternary structure, binds DNA as a dimer. In terms of processing, upon ER stress, translocated to the Golgi apparatus, where it is processed by regulated intramembrane proteolysis (RIP) to release the cytosol-facing N-terminal transcription factor domain. The cleavage is performed sequentially by site-1 and site-2 proteases (S1P/mbtps1 and S2P/mbtps2).

The protein resides in the endoplasmic reticulum membrane. The protein localises to the nucleus. Its function is as follows. Transcription factor involved in unfolded protein response (UPR). In the absence of endoplasmic reticulum (ER) stress, inserted into ER membranes, with N-terminal DNA-binding and transcription activation domains oriented toward the cytosolic face of the membrane. In response to ER stress, transported to the Golgi, where it is cleaved in a site-specific manner by resident proteases S1P/mbtps1 and S2P/mbtps2. The released N-terminal cytosolic domain is translocated to the nucleus to effect transcription of specific target genes. Plays a critical role in chondrogenesis. May protect neuroblastoma cells from ER stress-induced death. In vitro activates transcription of target genes via direct binding to the CRE site. This is Cyclic AMP-responsive element-binding protein 3-like protein 2 (creb3l2) from Danio rerio (Zebrafish).